Reading from the N-terminus, the 5065-residue chain is Dynein heavy chain-like protein 1 (5065 aa).

Positions 1–1957 (MELEKTHLIN…IIKMADATFE (1957 aa)) are stem. Residues 1677–1705 (QMEGFQKQLDRLSDSLSKIQKALGEYLEK) adopt a coiled-coil conformation. Positions 1958 to 2179 (YGYEYLGMCE…LRSLKSVLNS (222 aa)) are AAA 1. 1996–2003 (GPAGTGKT) lines the ATP pocket. The disordered stretch occupies residues 2203–2223 (FNETLDNNNNNDNNNERKTTT). The segment covering 2204–2215 (NETLDNNNNNDN) has biased composition (low complexity). AAA stretches follow at residues 2281-2632 (NEIH…YEYI), 2751-3004 (DVDR…WKLA), and 3097-3367 (IFNE…GNRY). 2319–2326 (GDVGTGKS) contributes to the ATP binding site. Residues 2507–2529 (EKNQNGNENGNENEKKNINIINN) are disordered. ATP-binding positions include 2790–2797 (GPPGSGKT) and 3135–3142 (GASGAGKT). The stalk stretch occupies residues 3386–3701 (IDEKKEEVSS…ETFINLEEAS (316 aa)). 2 coiled-coil regions span residues 3388–3466 (EKKE…LDEQ) and 3970–3997 (TMEKLKVQGAEASKEVNIAEEVMVEVEN). AAA regions lie at residues 3754–3983 (LSRP…EASK) and 4289–4507 (FNKI…VVDS). The segment covering 4686-4705 (KDKNKDEDKNKNKENDDNNK) has biased composition (basic and acidic residues). A disordered region spans residues 4686–4727 (KDKNKDEDKNKNKENDDNNKKHIGNNKLVISSSERTESETSE).

The protein belongs to the dynein heavy chain family. Consists of at least two heavy chains and a number of intermediate and light chains.

Its subcellular location is the cytoplasm. It is found in the cytoskeleton. Its function is as follows. Acts as a motor for the intracellular retrograde motility of vesicles and organelles along microtubules. Dynein has ATPase activity; the force-producing power stroke is thought to occur on release of ADP. The sequence is that of Dynein heavy chain-like protein 1 from Plasmodium falciparum (isolate 3D7).